A 187-amino-acid polypeptide reads, in one-letter code: Transcription antitermination protein NusB (187 aa).

A disordered region spans residues 135–187 (APAPESVAEEADEESSDSDAAASDPTDEGDVSDSSGASDEPAAPSAEIQPTVD). A compositionally biased stretch (acidic residues) spans 141–151 (VAEEADEESSD).

This sequence belongs to the NusB family.

Functionally, involved in transcription antitermination. Required for transcription of ribosomal RNA (rRNA) genes. Binds specifically to the boxA antiterminator sequence of the ribosomal RNA (rrn) operons. This is Transcription antitermination protein NusB from Bifidobacterium longum subsp. infantis (strain ATCC 15697 / DSM 20088 / JCM 1222 / NCTC 11817 / S12).